The following is a 319-amino-acid chain: ATP-dependent 6-phosphofructokinase (319 aa).

Residue G11 coordinates ATP. An ADP-binding site is contributed by 21–25 (RAVTR). Residues 72 to 73 (RF) and 102 to 105 (GDGS) each bind ATP. D103 provides a ligand contact to Mg(2+). Position 125–127 (125–127 (SID)) interacts with substrate. Catalysis depends on D127, which acts as the Proton acceptor. Position 154 (R154) interacts with ADP. Residues R162 and 169 to 171 (MGR) each bind substrate. ADP is bound by residues 185-187 (GAD) and 213-215 (KKH). Substrate-binding positions include E222, R243, and 249–252 (HMQR).

This sequence belongs to the phosphofructokinase type A (PFKA) family. ATP-dependent PFK group I subfamily. Prokaryotic clade 'B1' sub-subfamily. As to quaternary structure, homotetramer. Requires Mg(2+) as cofactor.

It localises to the cytoplasm. The enzyme catalyses beta-D-fructose 6-phosphate + ATP = beta-D-fructose 1,6-bisphosphate + ADP + H(+). It participates in carbohydrate degradation; glycolysis; D-glyceraldehyde 3-phosphate and glycerone phosphate from D-glucose: step 3/4. Allosterically activated by ADP and other diphosphonucleosides, and allosterically inhibited by phosphoenolpyruvate. Catalyzes the phosphorylation of D-fructose 6-phosphate to fructose 1,6-bisphosphate by ATP, the first committing step of glycolysis. In Lactobacillus johnsonii (strain CNCM I-12250 / La1 / NCC 533), this protein is ATP-dependent 6-phosphofructokinase.